The sequence spans 64 residues: Conotoxin Pu3.4 (64 aa).

Positions 1–16 are cleaved as a signal peptide; sequence LGVLLPICLLLFPLTA. A propeptide spanning residues 17-49 is cleaved from the precursor; that stretch reads LPLDGDQPADRPAERMQDDFITEQHPLFDPVKR. 3 disulfide bridges follow: cysteine 50-cysteine 63, cysteine 51-cysteine 59, and cysteine 55-cysteine 62. Proline 61 carries the post-translational modification 4-hydroxyproline.

The protein belongs to the conotoxin M superfamily. As to expression, expressed by the venom duct.

The protein localises to the secreted. This Conus pulicarius (Flea-bitten cone) protein is Conotoxin Pu3.4.